Consider the following 435-residue polypeptide: 3-ketoacyl-CoA thiolase (435 aa).

Cys-98 acts as the Acyl-thioester intermediate in catalysis. Active-site proton acceptor residues include His-391 and Cys-421.

The protein belongs to the thiolase-like superfamily. Thiolase family. In terms of assembly, heterotetramer of two alpha chains (FadJ) and two beta chains (FadI).

It localises to the cytoplasm. The catalysed reaction is an acyl-CoA + acetyl-CoA = a 3-oxoacyl-CoA + CoA. The protein operates within lipid metabolism; fatty acid beta-oxidation. Functionally, catalyzes the final step of fatty acid oxidation in which acetyl-CoA is released and the CoA ester of a fatty acid two carbons shorter is formed. This is 3-ketoacyl-CoA thiolase from Vibrio parahaemolyticus serotype O3:K6 (strain RIMD 2210633).